Reading from the N-terminus, the 964-residue chain is Protein translocase subunit SecA (964 aa).

ATP-binding positions include Q86, 104 to 108 (GEGKT), and D494. Residues 848–964 (AESADTIAVA…YKMCHGQNEK (117 aa)) are disordered. A compositionally biased stretch (acidic residues) spans 871-882 (AEGEVEEEDEDT). The span at 889 to 900 (AESAAASGAGES) shows a compositional bias: low complexity. 4 residues coordinate Zn(2+): C947, C949, C958, and H959.

This sequence belongs to the SecA family. In terms of assembly, monomer and homodimer. Part of the essential Sec protein translocation apparatus which comprises SecA, SecYEG and auxiliary proteins SecDF. Other proteins may also be involved. Zn(2+) is required as a cofactor.

Its subcellular location is the cell membrane. The protein resides in the cytoplasm. It carries out the reaction ATP + H2O + cellular proteinSide 1 = ADP + phosphate + cellular proteinSide 2.. Functionally, part of the Sec protein translocase complex. Interacts with the SecYEG preprotein conducting channel. Has a central role in coupling the hydrolysis of ATP to the transfer of proteins into and across the cell membrane, serving as an ATP-driven molecular motor driving the stepwise translocation of polypeptide chains across the membrane. The chain is Protein translocase subunit SecA from Bifidobacterium longum (strain DJO10A).